Here is a 107-residue protein sequence, read N- to C-terminus: Cytochrome c oxidase assembly protein COX16 homolog, mitochondrial (107 aa).

Residues Met1 to Lys14 are Mitochondrial matrix-facing. A helical membrane pass occupies residues Thr15–Ser37. Topologically, residues Gln38 to Thr107 are mitochondrial intermembrane. Residues Asn80–Thr107 form a disordered region.

Belongs to the COX16 family. As to quaternary structure, associates with the MITRAC complex. Interacts with MT-CO2/COX; specifically interacts with newly synthesized MT-CO2/COX. Interacts with SCO1, SCO2 and COA6.

It localises to the mitochondrion inner membrane. Required for the assembly of the mitochondrial respiratory chain complex IV (CIV), also known as cytochrome c oxidase. Promotes the insertion of copper into the active site of cytochrome c oxidase subunit II (MT-CO2/COX2). Interacts specifically with newly synthesized MT-CO2/COX and its copper center-forming metallochaperones SCO1, SCO2 and COA6. Probably facilitates MT-CO2/COX2 association with the MITRAC assembly intermediate containing MT-CO1/COX1, thereby participating in merging the MT-CO1/COX1 and MT-CO2/COX2 assembly lines. The protein is Cytochrome c oxidase assembly protein COX16 homolog, mitochondrial of Bos taurus (Bovine).